A 323-amino-acid polypeptide reads, in one-letter code: MAAPKGSLWVRTQLGLPPLLLLTMALAGGSGTASAEAFDSVLGDTASCHRACQLTYPLHTYPKEEELYACQRGCRLFSICQFVDDGIDLNRTKLECESACTEAYSQSDEQYACHLGCQNQLPFAELRQEQLMSLMPKMHLLFPLTLVRSFWSDMMDSAQSFITSSWTFYLQADDGKIVIFQSKPEIQYAPHLEQEPTNLRESSLSKMSYLQMRNSQAHRNFLEDGESDGFLRCLSLNSGWILTTTLVLSVMVLLWICCATVATAVEQYVPSEKLSIYGDLEFMNEQKLNRYPASSLVVVRSKTEDHEEAGPLPTKVNLAHSEI.

A signal peptide spans 1–35; sequence MAAPKGSLWVRTQLGLPPLLLLTMALAGGSGTASA. The Extracellular portion of the chain corresponds to 36-238; sequence EAFDSVLGDT…GFLRCLSLNS (203 aa). The N-linked (GlcNAc...) asparagine glycan is linked to Asn90. Residues 239-259 traverse the membrane as a helical segment; that stretch reads GWILTTTLVLSVMVLLWICCA. Over 260–323 the chain is Cytoplasmic; the sequence is TVATAVEQYV…TKVNLAHSEI (64 aa). The ATG16L1-binding motif motif lies at 263 to 281; that stretch reads TAVEQYVPSEKLSIYGDLE. Thr303 carries the phosphothreonine modification.

It belongs to the TMEM59 family. In terms of assembly, interacts with ATG16L1 (via WD repeats). In terms of processing, N-glycosylated.

The protein resides in the late endosome membrane. It is found in the lysosome membrane. The protein localises to the cell membrane. Its subcellular location is the golgi apparatus membrane. Acts as a regulator of autophagy in response to S.aureus infection by promoting activation of LC3 (MAP1LC3A, MAP1LC3B or MAP1LC3C). Acts by interacting with ATG16L1, leading to promote a functional complex between LC3 and ATG16L1 and promoting LC3 lipidation and subsequent activation of autophagy. Modulates the O-glycosylation and complex N-glycosylation steps occurring during the Golgi maturation of several proteins such as APP, BACE1, SEAP or PRNP. Inhibits APP transport to the cell surface and further shedding. The protein is Transmembrane protein 59 (TMEM59) of Homo sapiens (Human).